The primary structure comprises 313 residues: DNA-directed RNA polymerase subunit alpha (313 aa).

The interval 1 to 229 (MNSSNLLMEC…NLFKSIGEQK (229 aa)) is alpha N-terminal domain (alpha-NTD). The tract at residues 243-313 (IKPIDPYTHI…LKNKLGIVLK (71 aa)) is alpha C-terminal domain (alpha-CTD).

This sequence belongs to the RNA polymerase alpha chain family. As to quaternary structure, in plastids the minimal PEP RNA polymerase catalytic core is composed of four subunits: alpha, beta, beta', and beta''. When a (nuclear-encoded) sigma factor is associated with the core the holoenzyme is formed, which can initiate transcription.

The protein localises to the plastid. The protein resides in the chloroplast. The catalysed reaction is RNA(n) + a ribonucleoside 5'-triphosphate = RNA(n+1) + diphosphate. Functionally, DNA-dependent RNA polymerase catalyzes the transcription of DNA into RNA using the four ribonucleoside triphosphates as substrates. The polypeptide is DNA-directed RNA polymerase subunit alpha (Thalassiosira pseudonana (Marine diatom)).